Reading from the N-terminus, the 271-residue chain is MSTPGRSDQDAGAGTPPVDPAVSFTVLVPARLASTRLPRKALADLGGLPMVVRVAQRCALSGASAVVVATDSEEIRAACAAHGVRALMTRADHPTGSDRLAEACVQLGLDGRDIVVNVQGDEPLIEPGLIDACAGLLAQRSDCVMSTAAHALDDVEEYGNPNVVKVVTDAVGRALYFSRAPLPWWRDGYASGVLALPDPAPLRHIGIYGYSAGFLRRFPSLPESPLERIESLEQLRVLWHGERIAVHLSAVRPGPGIDTPEDLERVRRHFG.

The protein belongs to the KdsB family.

It localises to the cytoplasm. It carries out the reaction 3-deoxy-alpha-D-manno-oct-2-ulosonate + CTP = CMP-3-deoxy-beta-D-manno-octulosonate + diphosphate. Its pathway is nucleotide-sugar biosynthesis; CMP-3-deoxy-D-manno-octulosonate biosynthesis; CMP-3-deoxy-D-manno-octulosonate from 3-deoxy-D-manno-octulosonate and CTP: step 1/1. It participates in bacterial outer membrane biogenesis; lipopolysaccharide biosynthesis. Its function is as follows. Activates KDO (a required 8-carbon sugar) for incorporation into bacterial lipopolysaccharide in Gram-negative bacteria. The sequence is that of 3-deoxy-manno-octulosonate cytidylyltransferase from Leptothrix cholodnii (strain ATCC 51168 / LMG 8142 / SP-6) (Leptothrix discophora (strain SP-6)).